We begin with the raw amino-acid sequence, 366 residues long: Inhibin alpha chain (366 aa).

Positions 1 to 20 are cleaved as a signal peptide; the sequence is MVIQPSLLLLLLLTLQDVDS. Positions 21–63 are excised as a propeptide; it reads CQGPELVRELVLAKVKALFLDALGPPAMDGEGGGPGIRRLPRR. The propeptide at 64–233 is inhibin alpha N-terminal region; the sequence is HALGGFMHRT…APSAGERARR (170 aa). N-linked (GlcNAc...) asparagine glycans are attached at residues asparagine 147 and asparagine 269. 3 cysteine pairs are disulfide-bonded: cysteine 263-cysteine 328, cysteine 292-cysteine 363, and cysteine 296-cysteine 365.

Belongs to the TGF-beta family. Dimeric, linked by one or more disulfide bonds. Activin B is a dimer of alpha and beta-B. Inhibin A is a dimer of alpha and beta-A. Inhibin B is a dimer of alpha and beta-B. Interacts with TGFBR3L; this interaction regulates female fertility. Proteolytic processing yields a number of bioactive forms, consisting either solely of the mature alpha chain, of the most N-terminal propeptide linked through a disulfide bond to the mature alpha chain, or of the entire proprotein. As to expression, mainly expressed in ovary and testis. Alpha- and beta-B-subunits are the predominant forms found in testis. Also found in placenta, pituitary, adrenal gland, bone marrow, kidney, spinal cord and brain.

Its subcellular location is the secreted. In terms of biological role, inhibins and activins inhibit and activate, respectively, the secretion of follitropin by the pituitary gland. Inhibins/activins are involved in regulating a number of diverse functions such as hypothalamic and pituitary hormone secretion, gonadal hormone secretion, germ cell development and maturation, erythroid differentiation, insulin secretion, nerve cell survival, embryonic axial development or bone growth, depending on their subunit composition. Inhibins appear to oppose the functions of activins. Inhibin A is a dimer of alpha/INHA and beta-A/INHBA that functions as a feedback regulator in the hypothalamic-pituitary-gonadal (HPG) axis. Inhibits the secretion of FSH from the anterior pituitary gland by acting on pituitary gonadotrope cells. Antagonizes activin A by binding to the proteoglycan, betaglycan, and forming a stable complex with and, thereby, sequestering type II activin receptors while excluding type I receptor. Functionally, inhibin B is a dimer of alpha and beta-B that plays a crucial role in the regulation of the reproductive system by inhibiting the secretion of follicle-stimulating hormone (FSH) from the anterior pituitary gland. Thereby, maintains reproductive homeostasis in both males and females. Acts as a more potent suppressor of FSH release than inhibin A. Functions as competitive receptor antagonist binding activin type II receptors with high affinity in the presence of the TGF-beta type III coreceptor/TGFBR3L. This is Inhibin alpha chain (Inha) from Rattus norvegicus (Rat).